The sequence spans 371 residues: MDYYNNDTPGYVYLEDGTLMKGIGFGAKGIRVGEIVFTTSMNGYPESLTDPSYKGQILVITHPLIGNYGVPEKNYVNGILTNFESERIQAEGLVISELTEPFKWNSKQTLHEWLLSEGIPGVYGIDTRAVVKRVRSRGVMMGIIASGVEVNNPEEYLKKKYDEMNFIQYTSPKAPIIHQGKTGDVVVVVDCGIKHGILYQLYLRGFTVVRVPCNYSADKIMDFYPKGLLFSNGPGNPNLLTDLVKNFREIIEYNLPTLGICLGHQIATMALGGKVKKMKFGHRAINKPVIDTTTGKSYITTHNHGYAILSKQDVPIHTRVWFYNPDDGTVEGWIHEKYNIITTQFHPEARPGPWDVTWVFDKFKKMVVGDA.

Residues 1–186 (MDYYNNDTPG…IHQGKTGDVV (186 aa)) are CPSase. L-glutamine is bound by residues S52, G233, and G235. Residues 185-371 (VVVVVDCGIK…KFKKMVVGDA (187 aa)) form the Glutamine amidotransferase type-1 domain. C261 (nucleophile) is an active-site residue. L-glutamine is bound by residues L262, Q265, N303, G305, and Y306. Catalysis depends on residues H346 and E348.

The protein belongs to the CarA family. Composed of two chains; the small (or glutamine) chain promotes the hydrolysis of glutamine to ammonia, which is used by the large (or ammonia) chain to synthesize carbamoyl phosphate. Tetramer of heterodimers (alpha,beta)4.

The catalysed reaction is hydrogencarbonate + L-glutamine + 2 ATP + H2O = carbamoyl phosphate + L-glutamate + 2 ADP + phosphate + 2 H(+). The enzyme catalyses L-glutamine + H2O = L-glutamate + NH4(+). It participates in amino-acid biosynthesis; L-arginine biosynthesis; carbamoyl phosphate from bicarbonate: step 1/1. Its pathway is pyrimidine metabolism; UMP biosynthesis via de novo pathway; (S)-dihydroorotate from bicarbonate: step 1/3. Its function is as follows. Small subunit of the glutamine-dependent carbamoyl phosphate synthetase (CPSase). CPSase catalyzes the formation of carbamoyl phosphate from the ammonia moiety of glutamine, carbonate, and phosphate donated by ATP, constituting the first step of 2 biosynthetic pathways, one leading to arginine and/or urea and the other to pyrimidine nucleotides. The small subunit (glutamine amidotransferase) binds and cleaves glutamine to supply the large subunit with the substrate ammonia. In Sulfolobus acidocaldarius (strain ATCC 33909 / DSM 639 / JCM 8929 / NBRC 15157 / NCIMB 11770), this protein is Carbamoyl phosphate synthase small chain.